A 369-amino-acid chain; its full sequence is Peptide chain release factor 2 (369 aa).

At glutamine 252 the chain carries N5-methylglutamine.

This sequence belongs to the prokaryotic/mitochondrial release factor family. Post-translationally, methylated by PrmC. Methylation increases the termination efficiency of RF2.

The protein localises to the cytoplasm. Functionally, peptide chain release factor 2 directs the termination of translation in response to the peptide chain termination codons UGA and UAA. In Staphylococcus aureus (strain MRSA252), this protein is Peptide chain release factor 2.